The primary structure comprises 454 residues: Flavonoid 3-O-glucosyltransferase (454 aa).

Residue threonine 25 coordinates UDP. Histidine 26 acts as the Proton acceptor in catalysis. Arginine 89 contacts myricetin. Aspartate 124 (charge relay) is an active-site residue. Histidine 155, glutamate 192, and phenylalanine 202 together coordinate myricetin. Residues serine 282, serine 308, tryptophan 334, and alanine 335 each coordinate UDP. The UDP-alpha-D-glucose site is built by alanine 335, glutamine 337, histidine 352, tryptophan 355, asparagine 356, serine 357, and glutamate 360. Histidine 352 lines the UDP pocket. 3 residues coordinate UDP: asparagine 356, serine 357, and glutamate 360. Glycine 375 is a binding site for myricetin. Aspartate 376 and glutamine 377 together coordinate UDP-alpha-D-glucose.

The protein belongs to the UDP-glycosyltransferase family. Highly expressed in flower buds, flowers and pods. Lower expression in leaves, petioles and stems.

Its pathway is secondary metabolite biosynthesis; flavonoid biosynthesis. Functionally, catalyzes the glycosylation of flavonoids at the 3-O-position. Glycosylates the 7-O-position if the 3-O-position is not available. Also able to perform 3-O-glycosylation of anthocyanidins. The chain is Flavonoid 3-O-glucosyltransferase (UGT78G1) from Medicago truncatula (Barrel medic).